We begin with the raw amino-acid sequence, 172 residues long: R-phycocyanin-2 beta chain (172 aa).

Asn72 bears the N4-methylasparagine mark. A (2R,3E)-phycocyanobilin-binding site is contributed by Cys82. Cys153 contacts (2R,3E)-phycoerythrobilin.

Belongs to the phycobiliprotein family. As to quaternary structure, heterodimer of an alpha and a beta chain. Post-translationally, contains two covalently linked bilin chromophores.

It localises to the cellular thylakoid membrane. Functionally, light-harvesting photosynthetic bile pigment-protein from the phycobiliprotein complex. This chain is R-phycocyanin-2 beta chain (rpcB), found in Synechococcus sp. (strain WH8103).